We begin with the raw amino-acid sequence, 359 residues long: Alanine racemase, biosynthetic (359 aa).

The Proton acceptor; specific for D-alanine role is filled by Lys34. Residue Lys34 is modified to N6-(pyridoxal phosphate)lysine. Lys122 is subject to N6-carboxylysine. Arg129 contributes to the substrate binding site. The Proton acceptor; specific for L-alanine role is filled by Tyr255. Met303 contacts substrate.

The protein belongs to the alanine racemase family. As to quaternary structure, homodimer. Pyridoxal 5'-phosphate serves as cofactor.

The enzyme catalyses L-alanine = D-alanine. Its pathway is amino-acid biosynthesis; D-alanine biosynthesis; D-alanine from L-alanine: step 1/1. It functions in the pathway cell wall biogenesis; peptidoglycan biosynthesis. Catalyzes the interconversion of L-alanine and D-alanine. Provides the D-alanine required for cell wall biosynthesis. The polypeptide is Alanine racemase, biosynthetic (Escherichia coli (strain K12)).